The following is a 331-amino-acid chain: Ferrochelatase (331 aa).

Fe cation contacts are provided by His-187 and Glu-286.

This sequence belongs to the ferrochelatase family.

It is found in the cytoplasm. It catalyses the reaction heme b + 2 H(+) = protoporphyrin IX + Fe(2+). Its pathway is porphyrin-containing compound metabolism; protoheme biosynthesis; protoheme from protoporphyrin-IX: step 1/1. In terms of biological role, catalyzes the ferrous insertion into protoporphyrin IX. This chain is Ferrochelatase, found in Legionella pneumophila (strain Lens).